The following is an 837-amino-acid chain: Mannosyl-oligosaccharide glucosidase (837 aa).

The span at 1 to 10 (MARGERRRRA) shows a compositional bias: basic residues. At 1–38 (MARGERRRRAVPAEGVRTAERAARGGPGRRDGRGGGPR) the chain is on the cytoplasmic side. The disordered stretch occupies residues 1 to 39 (MARGERRRRAVPAEGVRTAERAARGGPGRRDGRGGGPRS). The short motif at 3–9 (RGERRRR) is the Endoplasmic reticulum targeting element. Over residues 17-33 (RTAERAARGGPGRRDGR) the composition is skewed to basic and acidic residues. Residues 39–59 (STAGGVALAVVVLSLALGMSG) traverse the membrane as a helical; Signal-anchor for type II membrane protein segment. The Lumenal segment spans residues 60–837 (RWVLAWYRAR…LVLLAMAEDY (778 aa)). A required for endoplasmic reticulum targeting region spans residues 76–137 (SAPPVLPADS…PGTPKLRHTC (62 aa)). Asp583 acts as the Proton donor in catalysis. Asn657 carries N-linked (GlcNAc...) asparagine glycosylation. The active-site Proton acceptor is Glu807.

The protein belongs to the glycosyl hydrolase 63 family.

It is found in the endoplasmic reticulum membrane. The catalysed reaction is N(4)-(alpha-D-Glc-(1-&gt;2)-alpha-D-Glc-(1-&gt;3)-alpha-D-Glc-(1-&gt;3)-alpha-D-Man-(1-&gt;2)-alpha-D-Man-(1-&gt;2)-alpha-D-Man-(1-&gt;3)-[alpha-D-Man-(1-&gt;2)-alpha-D-Man-(1-&gt;3)-[alpha-D-Man-(1-&gt;2)-alpha-D-Man-(1-&gt;6)]-alpha-D-Man-(1-&gt;6)]-beta-D-Man-(1-&gt;4)-beta-D-GlcNAc-(1-&gt;4)-beta-D-GlcNAc)-L-asparaginyl-[protein] + H2O = N(4)-(alpha-D-Glc-(1-&gt;3)-alpha-D-Glc-(1-&gt;3)-alpha-D-Man-(1-&gt;2)-alpha-D-Man-(1-&gt;2)-alpha-D-Man-(1-&gt;3)-[alpha-D-Man-(1-&gt;2)-alpha-D-Man-(1-&gt;3)-[alpha-D-Man-(1-&gt;2)-alpha-D-Man-(1-&gt;6)]-alpha-D-Man-(1-&gt;6)]-beta-D-Man-(1-&gt;4)-beta-D-GlcNAc-(1-&gt;4)-beta-D-GlcNAc)-L-asparaginyl-[protein] + beta-D-glucose. Its pathway is glycan metabolism; N-glycan degradation. Its activity is regulated as follows. Inhibited by 1-deoxynojirimycin (40% inhibition) and N,N-dimethyl-deoxynojirimycin (85% inhibition). Functionally, in the context of N-glycan degradation, cleaves the distal alpha 1,2-linked glucose residue from the Glc(3)Man(9)GlcNAc(2) oligosaccharide precursor in a highly specific manner. The polypeptide is Mannosyl-oligosaccharide glucosidase (Homo sapiens (Human)).